The primary structure comprises 310 residues: Protein LRATD2 (310 aa).

The disordered stretch occupies residues 1 to 76; that stretch reads MGNQVEKLTH…PPPQPQPYDP (76 aa). A compositionally biased stretch (gly residues) spans 54–64; the sequence is PDGGGLPDGGD. Residues 65–74 are compositionally biased toward pro residues; that stretch reads GPPPPQPQPY. Residues 122-217 form the LRAT domain; the sequence is VEFVSQAQYP…CRYGKREFKI (96 aa). A disordered region spans residues 274 to 310; that stretch reads HPAEPEEGDSNVARTTPPPGRPPAPSSEEEDGEAVAH. Pro residues predominate over residues 289–298; that stretch reads TPPPGRPPAP. Acidic residues predominate over residues 300–310; sequence SEEEDGEAVAH.

The protein belongs to the LRATD family. Expressed in esophageal squamous cell carcinomas.

This is Protein LRATD2 from Homo sapiens (Human).